Here is a 162-residue protein sequence, read N- to C-terminus: Putative pre-16S rRNA nuclease (162 aa).

It belongs to the YqgF nuclease family.

The protein localises to the cytoplasm. Its function is as follows. Could be a nuclease involved in processing of the 5'-end of pre-16S rRNA. This is Putative pre-16S rRNA nuclease from Brucella melitensis biotype 2 (strain ATCC 23457).